A 134-amino-acid chain; its full sequence is Large ribosomal subunit protein uL16c (134 aa).

Over residues 1-17 the composition is skewed to basic residues; it reads MLSPKRTRFRKQHRGRM. Positions 1 to 21 are disordered; it reads MLSPKRTRFRKQHRGRMKGIS.

Belongs to the universal ribosomal protein uL16 family. Part of the 50S ribosomal subunit.

It is found in the plastid. The protein localises to the chloroplast. This Solanum bulbocastanum (Wild potato) protein is Large ribosomal subunit protein uL16c.